A 164-amino-acid polypeptide reads, in one-letter code: Ubiquitin-fold modifier-conjugating enzyme 1 (164 aa).

Cys-116 functions as the Glycyl thioester intermediate in the catalytic mechanism.

Belongs to the ubiquitin-conjugating enzyme family. UFC1 subfamily.

Its function is as follows. E2-like enzyme which forms an intermediate with UFM1 via a thioester linkage. In Drosophila sechellia (Fruit fly), this protein is Ubiquitin-fold modifier-conjugating enzyme 1.